The primary structure comprises 122 residues: MARIAGVNIPTNKRVIIALQYIHGIGPKKAEEICEKVSIPPERRVVDLTDAEVLQIRETIDRDYIVEGDLRREVAINIKRLMDLGCYRGLRHRRQLPVRGQRTHTNARTRKGKAKPIAGKKK.

Residues 95-122 (QLPVRGQRTHTNARTRKGKAKPIAGKKK) form a disordered region.

The protein belongs to the universal ribosomal protein uS13 family. In terms of assembly, part of the 30S ribosomal subunit. Forms a loose heterodimer with protein S19. Forms two bridges to the 50S subunit in the 70S ribosome.

Located at the top of the head of the 30S subunit, it contacts several helices of the 16S rRNA. In the 70S ribosome it contacts the 23S rRNA (bridge B1a) and protein L5 of the 50S subunit (bridge B1b), connecting the 2 subunits; these bridges are implicated in subunit movement. Contacts the tRNAs in the A and P-sites. This is Small ribosomal subunit protein uS13 from Beijerinckia indica subsp. indica (strain ATCC 9039 / DSM 1715 / NCIMB 8712).